The primary structure comprises 489 residues: Rhamnulokinase (489 aa).

13–17 contacts ATP; that stretch reads ASSGR. C68 and C222 are oxidised to a cystine. Substrate-binding positions include G83 and 236 to 238; that span reads HDT. D237 acts as the Proton acceptor in catalysis. T259 serves as a coordination point for ATP. Residue N296 participates in substrate binding. Q304 provides a ligand contact to ATP. C353 and C370 are disulfide-bonded. G402 contributes to the ATP binding site. Cysteines 413 and 417 form a disulfide.

Belongs to the rhamnulokinase family. The cofactor is Mg(2+).

It catalyses the reaction L-rhamnulose + ATP = L-rhamnulose 1-phosphate + ADP + H(+). The protein operates within carbohydrate degradation; L-rhamnose degradation; glycerone phosphate from L-rhamnose: step 2/3. Functionally, involved in the catabolism of L-rhamnose (6-deoxy-L-mannose). Catalyzes the transfer of the gamma-phosphate group from ATP to the 1-hydroxyl group of L-rhamnulose to yield L-rhamnulose 1-phosphate. The chain is Rhamnulokinase from Salmonella typhi.